Here is a 547-residue protein sequence, read N- to C-terminus: Glucose-6-phosphate isomerase (547 aa).

Residue Glu-353 is the Proton donor of the active site. Active-site residues include His-384 and Lys-512.

It belongs to the GPI family.

The protein localises to the cytoplasm. It carries out the reaction alpha-D-glucose 6-phosphate = beta-D-fructose 6-phosphate. Its pathway is carbohydrate biosynthesis; gluconeogenesis. It functions in the pathway carbohydrate degradation; glycolysis; D-glyceraldehyde 3-phosphate and glycerone phosphate from D-glucose: step 2/4. Functionally, catalyzes the reversible isomerization of glucose-6-phosphate to fructose-6-phosphate. This is Glucose-6-phosphate isomerase from Glaesserella parasuis serovar 5 (strain SH0165) (Haemophilus parasuis).